Here is a 704-residue protein sequence, read N- to C-terminus: ATP-dependent zinc metalloprotease FtsH (704 aa).

Residues 1–17 are Cytoplasmic-facing; sequence MADSAKTPRGKKRRPFT. Residues 18-38 form a helical membrane-spanning segment; that stretch reads GLALWIIVALLLGMAMFSLFG. The Extracellular segment spans residues 39–127; the sequence is RDGYQQIDTQ…DEIASSSWWS (89 aa). The helical transmembrane segment at 128–148 threads the bilayer; that stretch reads TLLLSFLPLLIFIGLFWFLIM. The Cytoplasmic portion of the chain corresponds to 149–704; it reads NAQGGGKAMQ…GSAGTDGTGR (556 aa). 217–224 serves as a coordination point for ATP; sequence GPPGTGKT. His439 provides a ligand contact to Zn(2+). The active site involves Glu440. Zn(2+) contacts are provided by His443 and Asp515. Residues 624 to 704 are disordered; the sequence is PREVWISSTE…GSAGTDGTGR (81 aa). Positions 681-704 are enriched in gly residues; the sequence is PHGGEPGGGGYGYDGSAGTDGTGR.

In the central section; belongs to the AAA ATPase family. The protein in the C-terminal section; belongs to the peptidase M41 family. As to quaternary structure, homohexamer. The cofactor is Zn(2+).

The protein localises to the cell membrane. In terms of biological role, acts as a processive, ATP-dependent zinc metallopeptidase for both cytoplasmic and membrane proteins. Plays a role in the quality control of integral membrane proteins. This Brachybacterium faecium (strain ATCC 43885 / DSM 4810 / JCM 11609 / LMG 19847 / NBRC 14762 / NCIMB 9860 / 6-10) protein is ATP-dependent zinc metalloprotease FtsH.